Here is a 2971-residue protein sequence, read N- to C-terminus: Reticulocyte-binding protein homolog 1 (2971 aa).

A signal peptide spans 1-20; it reads MQRWIFCNIVLHILIYLAEF. The Extracellular portion of the chain corresponds to 21 to 2897; the sequence is SHEQESYSSN…KKQKNGNHER (2877 aa). The segment at 30 to 50 is disordered; sequence NEKIRKDYSDDNNYEPTPSYE. Asn-70, Asn-78, Asn-87, Asn-135, Asn-286, Asn-384, and Asn-417 each carry an N-linked (GlcNAc...) asparagine glycan. The interval 500–833 is erythrocyte binding domain (EBD); the sequence is LQIVQQKLLE…MQQGYNNLTN (334 aa). LRR repeat units lie at residues 528–553 and 607–633; these read YKNI…NIKD and LNNL…ILQK. An N-linked (GlcNAc...) asparagine glycan is attached at Asn-685. LRR repeat units follow at residues 736-758 and 785-808; these read IDTI…VYTD and QETL…LLKE. Asn-830, Asn-892, Asn-1000, and Asn-1010 each carry an N-linked (GlcNAc...) asparagine glycan. LRR repeat units follow at residues 993–1018 and 1356–1381; these read LKIL…TLND and LRNI…AHKE. An N-linked (GlcNAc...) asparagine glycan is attached at Asn-1425. One copy of the LRR 7 repeat lies at 1466-1489; it reads AKYMENIDTYKNNIEIISKQINPE. N-linked (GlcNAc...) asparagine glycosylation is present at Asn-1496. 3 LRR repeats span residues 1512-1537, 1586-1609, and 1611-1636; these read YKQI…ELQN, SQNI…LEEE, and EQMK…AFIN. N-linked (GlcNAc...) asparagine glycans are attached at residues Asn-1664, Asn-1692, Asn-1718, Asn-1816, and Asn-1844. LRR repeat units lie at residues 1700 to 1723 and 1809 to 1834; these read LQEL…TIKY and LKLF…SIQN. An LRR 13 repeat occupies 1880-1903; sequence QNEIRNMNLEKNFMLDKSKKIDEE. N-linked (GlcNAc...) asparagine glycans are attached at residues Asn-1913 and Asn-1918. The LRR 14 repeat unit spans residues 1944–1967; that stretch reads KENIEKIKQEINTLSDVFKKPFFF. Asn-2054, Asn-2207, Asn-2289, Asn-2300, Asn-2338, and Asn-2405 each carry an N-linked (GlcNAc...) asparagine glycan. Residues 2523–2548 form an LRR 15 repeat; that stretch reads IKDIDNVFIKIQNNKFEQIQKYIEII. 2 N-linked (GlcNAc...) asparagine glycosylation sites follow: Asn-2598 and Asn-2752. An LRR 16 repeat occupies 2731–2754; that stretch reads ENIFDNIQLKKKDIDDIIININNT. Composition is skewed to basic and acidic residues over residues 2773-2782 and 2795-2804; these read KVDEKSEINN and QKNKIKDHNL. Disordered regions lie at residues 2773–2825 and 2840–2862; these read KVDE…MKEQ and HHVH…LQEQ. The N-linked (GlcNAc...) asparagine glycan is linked to Asn-2811. The segment covering 2814–2825 has biased composition (basic and acidic residues); it reads EESHQNEQMKEQ. Residues 2898–2918 form a helical membrane-spanning segment; the sequence is MYFASGIVVSILFLSSLGFVI. At 2919 to 2971 the chain is on the cytoplasmic side; the sequence is NSKNNKQEYDKEQEKQQQNDFVCDNNKMDDKSTQKYGRNQEEVMEISFDNDYI.

As to quaternary structure, may in part interact with AMA1 in the moving tight junction between the parasite and the erythrocyte membranes; the interaction may facilitate junction formation and active invasion. In terms of processing, proteolytically processed into multiple fragments following schizont rupture. In the mature schizont stage prior to merozoite release, full length RH1 is processed post-Golgi into a 240 kDa N-terminal form and a 120 kDa C-terminal form containing the transmembrane region. Both forms appear not to form a complex. However, they appear to remain in close proximity in late schizonts. Following merozoite invasion of host erythrocytes, the 240 kDa form is further processed into a 140 kDa form which may be involved in the disengagement of the ligand-receptor complex required during the invasion process. Also, the 120 kDa is further cleaved into a 110 kDa form and a transmembrane 9 kDa form probably by ROM4.

It localises to the cell membrane. The protein resides in the secreted. Its subcellular location is the cell junction. It is found in the tight junction. The protein localises to the cytoplasmic vesicle. It localises to the secretory vesicle. The protein resides in the rhoptry. Functionally, during the asexual blood stage, binds to a sialic acid containing receptor on the surface of the host erythrocyte and thus is involved in merozoite invasion. Binds erythrocytes via a neuraminidase sensitive and trypsin-, chymotrypsin-resistant receptor. After merozoite attachment and reorientation, RH1 binding to its erythrocyte receptor triggers an increase in intracellular Ca(2+) within the parasite resulting in the release of microneme proteins such as EBA175 which in turn leads to the formation of the tight junction between parasite and host cell. In Plasmodium falciparum (isolate 3D7), this protein is Reticulocyte-binding protein homolog 1.